The following is a 96-amino-acid chain: Small ribosomal subunit protein bS6 (96 aa).

The protein belongs to the bacterial ribosomal protein bS6 family.

In terms of biological role, binds together with bS18 to 16S ribosomal RNA. This is Small ribosomal subunit protein bS6 from Gloeobacter violaceus (strain ATCC 29082 / PCC 7421).